The following is a 126-amino-acid chain: RutC family protein bbp_334 (126 aa).

Belongs to the RutC family.

This is RutC family protein bbp_334 from Buchnera aphidicola subsp. Baizongia pistaciae (strain Bp).